The following is a 204-amino-acid chain: Transcription factor bHLH120 (204 aa).

Disordered stretches follow at residues 1 to 27 (MNPSNNPKKTRHQSHMPQERDETKKEK) and 93 to 116 (KREIGDPTSLTGSGSGSGSSRSEP). Residues 26–78 (EKKLLHRNIERQRRQEMAILFASLRSQLPLKYIKGKRAMSDHVNGAVSFIKDT) form the bHLH domain.

As to quaternary structure, homodimer.

Its subcellular location is the nucleus. This is Transcription factor bHLH120 (BHLH120) from Arabidopsis thaliana (Mouse-ear cress).